The chain runs to 201 residues: Ribosomal RNA large subunit methyltransferase E (201 aa).

S-adenosyl-L-methionine contacts are provided by Gly-49, Trp-51, Asp-69, Asp-90, and Asp-113. Lys-153 (proton acceptor) is an active-site residue.

Belongs to the class I-like SAM-binding methyltransferase superfamily. RNA methyltransferase RlmE family.

It is found in the cytoplasm. The catalysed reaction is uridine(2552) in 23S rRNA + S-adenosyl-L-methionine = 2'-O-methyluridine(2552) in 23S rRNA + S-adenosyl-L-homocysteine + H(+). Specifically methylates the uridine in position 2552 of 23S rRNA at the 2'-O position of the ribose in the fully assembled 50S ribosomal subunit. This chain is Ribosomal RNA large subunit methyltransferase E, found in Desulfotalea psychrophila (strain LSv54 / DSM 12343).